A 504-amino-acid polypeptide reads, in one-letter code: L-carnitine/gamma-butyrobetaine antiporter (504 aa).

12 helical membrane-spanning segments follow: residues 10–30 (IEPKVFFPPLIIVGILCWLTV), 51–71 (WGWAFEWYMVVMLFGWFWLVF), 92–112 (IFMMFASCTSAAVLFWGSIEI), 143–163 (GPLPWATYSFLSVAFAYFFFV), 195–215 (FYLVALIFAMGTSLGLATPLV), 231–251 (LDAIIITCWIILNTICVACGL), 263–283 (SYLSFLMLGWVFIVSGASFIM), 316–336 (WTVFYWAWWVIYAIQMSIFLA), 347–367 (LCFGMVLGLTASTWILWTVLG), 398–418 (WAALPLSTATMWGFFILCFIA), 446–466 (LLVRIGWSVLVGIIGIVLLAL), and 475–495 (AIIAGGCPLFFVNIMVTLSFI).

Belongs to the BCCT transporter (TC 2.A.15) family. CaiT subfamily. Homotrimer.

The protein resides in the cell inner membrane. The catalysed reaction is 4-(trimethylamino)butanoate(in) + (R)-carnitine(out) = 4-(trimethylamino)butanoate(out) + (R)-carnitine(in). It participates in amine and polyamine metabolism; carnitine metabolism. Its function is as follows. Catalyzes the exchange of L-carnitine for gamma-butyrobetaine. This Escherichia coli O81 (strain ED1a) protein is L-carnitine/gamma-butyrobetaine antiporter.